Reading from the N-terminus, the 432-residue chain is tRNA modification GTPase MnmE (432 aa).

R23, E85, and K124 together coordinate (6S)-5-formyl-5,6,7,8-tetrahydrofolate. Positions 217–362 (GARLALIGAP…LKEAVREALL (146 aa)) constitute a TrmE-type G domain. N227 serves as a coordination point for K(+). GTP contacts are provided by residues 227–232 (NAGKSS), 246–252 (SPIPGTT), and 271–274 (DTAG). S231 provides a ligand contact to Mg(2+). K(+)-binding residues include S246, I248, and T251. T252 contacts Mg(2+). K432 lines the (6S)-5-formyl-5,6,7,8-tetrahydrofolate pocket.

It belongs to the TRAFAC class TrmE-Era-EngA-EngB-Septin-like GTPase superfamily. TrmE GTPase family. In terms of assembly, homodimer. Heterotetramer of two MnmE and two MnmG subunits. K(+) serves as cofactor.

It is found in the cytoplasm. Functionally, exhibits a very high intrinsic GTPase hydrolysis rate. Involved in the addition of a carboxymethylaminomethyl (cmnm) group at the wobble position (U34) of certain tRNAs, forming tRNA-cmnm(5)s(2)U34. This chain is tRNA modification GTPase MnmE, found in Thermus thermophilus (strain ATCC 27634 / DSM 579 / HB8).